Reading from the N-terminus, the 465-residue chain is ATP-dependent rRNA helicase rrp3 (465 aa).

The segment at 1–46 (MSALKKRKITEKQPETNSDSEAESVSSRGSAKDETQTSGEEPAPAK) is disordered. Residues 15 to 29 (ETNSDSEAESVSSRG) show a composition bias toward polar residues. The Q motif signature appears at 46–74 (KSFKELGIIDQLCEACENMGYKAPTPIQS). In terms of domain architecture, Helicase ATP-binding spans 77–248 (IPLALEGRDV…RASLSNPVRV (172 aa)). 90 to 97 (AETGSGKT) contacts ATP. The DEAD box motif lies at 196 to 199 (DEAD). The 145-residue stretch at 275–419 (YLVYLLNEFA…EYQVEKDEVM (145 aa)) folds into the Helicase C-terminal domain. A disordered region spans residues 436–465 (MKSFDEKKGARGKKFGKGKRSRDDMDQEEG). Basic residues predominate over residues 445–455 (ARGKKFGKGKR).

The protein belongs to the DEAD box helicase family. DDX47/RRP3 subfamily. As to quaternary structure, interacts with the SSU processome.

Its subcellular location is the nucleus. It catalyses the reaction ATP + H2O = ADP + phosphate + H(+). Its function is as follows. ATP-dependent rRNA helicase required for pre-ribosomal RNA processing. Involved in the maturation of the 35S-pre-rRNA and to its cleavage to mature 18S rRNA. The protein is ATP-dependent rRNA helicase rrp3 of Emericella nidulans (strain FGSC A4 / ATCC 38163 / CBS 112.46 / NRRL 194 / M139) (Aspergillus nidulans).